Consider the following 139-residue polypeptide: Ribulose bisphosphate carboxylase small subunit, plasmid (139 aa).

The protein belongs to the RuBisCO small chain family. Heterohexadecamer of 8 large and 8 small subunits.

In terms of biological role, ruBisCO catalyzes two reactions: the carboxylation of D-ribulose 1,5-bisphosphate, the primary event in carbon dioxide fixation, as well as the oxidative fragmentation of the pentose substrate. Both reactions occur simultaneously and in competition at the same active site. Although the small subunit is not catalytic it is essential for maximal activity. This chain is Ribulose bisphosphate carboxylase small subunit, plasmid, found in Cupriavidus necator (strain ATCC 17699 / DSM 428 / KCTC 22496 / NCIMB 10442 / H16 / Stanier 337) (Ralstonia eutropha).